The sequence spans 358 residues: Alpha-2-HS-glycoprotein (358 aa).

The N-terminal stretch at 1–18 is a signal peptide; it reads MKFFVLFLCLVQLWGCHS. The Cystatin fetuin-A-type 1 domain maps to 27–133; it reads ERNPACDDPE…QFSVVFAKCE (107 aa). 6 cysteine pairs are disulfide-bonded: Cys-32–Cys-349, Cys-89–Cys-100, Cys-114–Cys-132, Cys-146–Cys-149, Cys-208–Cys-218, and Cys-229–Cys-246. The N-linked (GlcNAc...) asparagine glycan is linked to Asn-99. At Ser-134 the chain carries Phosphoserine. Position 135 is a phosphothreonine (Thr-135). Residue Ser-138 is modified to Phosphoserine. One can recognise a Cystatin fetuin-A-type 2 domain in the interval 144–254; the sequence is KVCPQCPLLT…TCTVFPTQPV (111 aa). 2 N-linked (GlcNAc...) asparagine glycosylation sites follow: Asn-156 and Asn-176. The disordered stretch occupies residues 257 to 288; the sequence is LPQPDAASSANPPPAADPAVSPPSSPSVPVDS. Over residues 267–282 the composition is skewed to pro residues; that stretch reads NPPPAADPAVSPPSSP. Phosphoserine occurs at positions 318 and 320. A disordered region spans residues 320–350; it reads SGEAFGPRQKPKVTHPGVASGVGPVPPPPCP.

The protein belongs to the fetuin family. Post-translationally, phosphorylated by FAM20C in the extracellular medium. Bone marrow.

Its subcellular location is the secreted. The chain is Alpha-2-HS-glycoprotein (AHSG) from Cavia porcellus (Guinea pig).